Consider the following 600-residue polypeptide: Spastin (600 aa).

Residues 1 to 39 (MNSPGGRNDKKKPVTPAAETGPGSPTTPPSTETQVVLAP) form a disordered region. The Cytoplasmic segment spans residues 1 to 53 (MNSPGGRNDKKKPVTPAAETGPGSPTTPPSTETQVVLAPPSPHKRNLHLFSYP). Positions 15–33 (TPAAETGPGSPTTPPSTET) are enriched in low complexity. Positions 54 to 74 (LLAVFSLLRFLAFQLGLLFVW) form an intramembrane region, helical. Topologically, residues 75-600 (CCELLSRSVM…WNQDFGDTTV (526 aa)) are cytoplasmic. An MIT domain is found at 110–185 (YHQQAFQYIS…IMAKDRLQLL (76 aa)). The tract at residues 213–294 (GLLKPEKGAV…KPATPTTAVR (82 aa)) is disordered. Basic and acidic residues predominate over residues 216–228 (KPEKGAVPKKKDP). Residues 253–291 (PNCTSVPTSARQAGAHTPSNRGATGKNNTRTNKPATPTT) are compositionally biased toward polar residues. Residue 366-373 (GPPGNGKT) participates in ATP binding.

It belongs to the AAA ATPase family. Spastin subfamily. Homohexamer. The homohexamer is stabilized by ATP-binding. The homohexamer may adopt a ring conformation through which microtubules pass prior to being severed. Interacts with microtubules.

The protein localises to the membrane. It localises to the cytoplasm. The protein resides in the cytoskeleton. It is found in the microtubule organizing center. Its subcellular location is the centrosome. The protein localises to the perinuclear region. It localises to the nucleus. The catalysed reaction is n ATP + n H2O + a microtubule = n ADP + n phosphate + (n+1) alpha/beta tubulin heterodimers.. ATP-dependent microtubule severing protein that specifically recognizes and cuts microtubules that are polyglutamylated. Preferentially recognizes and acts on microtubules decorated with short polyglutamate tails: severing activity increases as the number of glutamates per tubulin rises from one to eight, but decreases beyond this glutamylation threshold. Microtubule severing promotes reorganization of cellular microtubule arrays and the release of microtubules from the centrosome following nucleation. Required for membrane traffic from the endoplasmic reticulum (ER) to the Golgi and for completion of the abscission stage of cytokinesis. Also plays a role in axon growth and the formation of axonal branches. This Xenopus laevis (African clawed frog) protein is Spastin.